A 429-amino-acid polypeptide reads, in one-letter code: 3-phosphoshikimate 1-carboxyvinyltransferase (429 aa).

3-phosphoshikimate-binding residues include lysine 22, serine 23, and arginine 27. Lysine 22 serves as a coordination point for phosphoenolpyruvate. 2 residues coordinate phosphoenolpyruvate: glycine 93 and arginine 122. 3-phosphoshikimate-binding residues include serine 168, serine 169, glutamine 170, serine 196, aspartate 311, and lysine 338. Glutamine 170 lines the phosphoenolpyruvate pocket. Aspartate 311 serves as the catalytic Proton acceptor. Arginine 342 and arginine 384 together coordinate phosphoenolpyruvate.

It belongs to the EPSP synthase family. In terms of assembly, monomer.

The protein localises to the cytoplasm. It catalyses the reaction 3-phosphoshikimate + phosphoenolpyruvate = 5-O-(1-carboxyvinyl)-3-phosphoshikimate + phosphate. The protein operates within metabolic intermediate biosynthesis; chorismate biosynthesis. Functionally, catalyzes the transfer of the enolpyruvyl moiety of phosphoenolpyruvate (PEP) to the 5-hydroxyl of shikimate-3-phosphate (S3P) to produce enolpyruvyl shikimate-3-phosphate and inorganic phosphate. The polypeptide is 3-phosphoshikimate 1-carboxyvinyltransferase (Methanocaldococcus jannaschii (strain ATCC 43067 / DSM 2661 / JAL-1 / JCM 10045 / NBRC 100440) (Methanococcus jannaschii)).